We begin with the raw amino-acid sequence, 98 residues long: Complement inhibitor RaCI1 (98 aa).

Positions 1–20 (MNAMLVLFIASALFISEHNT) are cleaved as a signal peptide. Cystine bridges form between C33–C57, C38–C59, and C53–C74. The tract at residues 79 to 98 (TTKPPMAPGDNKDNKEEESN) is disordered. The span at 88–98 (DNKDNKEEESN) shows a compositional bias: basic and acidic residues.

This sequence belongs to the RaCI family. In terms of tissue distribution, expressed in salivary glands.

The protein resides in the secreted. In terms of biological role, complement inhibitor. Prevents complement-mediated C5 activation by binding to C5. Binds C5 at a different binding site than the other tick complement inhibitors OmCI and CirpT1, and the drug eculizumab. Inhibits the complement in human and guinea pig but not in other species tested (rabbit, rat, mouse, and pig). The polypeptide is Complement inhibitor RaCI1 (Rhipicephalus appendiculatus (Brown ear tick)).